A 398-amino-acid chain; its full sequence is 1-deoxy-D-xylulose 5-phosphate reductoisomerase (398 aa).

Residues threonine 11, glycine 12, serine 13, isoleucine 14, arginine 38, asparagine 39, and asparagine 125 each coordinate NADPH. Lysine 126 serves as a coordination point for 1-deoxy-D-xylulose 5-phosphate. Residue glutamate 127 participates in NADPH binding. Aspartate 151 contacts Mn(2+). Residues serine 152, glutamate 153, serine 179, and histidine 202 each coordinate 1-deoxy-D-xylulose 5-phosphate. Glutamate 153 is a binding site for Mn(2+). Glycine 208 contacts NADPH. 4 residues coordinate 1-deoxy-D-xylulose 5-phosphate: serine 215, asparagine 220, lysine 221, and glutamate 224. Residue glutamate 224 coordinates Mn(2+).

The protein belongs to the DXR family. Mg(2+) is required as a cofactor. It depends on Mn(2+) as a cofactor.

It catalyses the reaction 2-C-methyl-D-erythritol 4-phosphate + NADP(+) = 1-deoxy-D-xylulose 5-phosphate + NADPH + H(+). It participates in isoprenoid biosynthesis; isopentenyl diphosphate biosynthesis via DXP pathway; isopentenyl diphosphate from 1-deoxy-D-xylulose 5-phosphate: step 1/6. Its function is as follows. Catalyzes the NADPH-dependent rearrangement and reduction of 1-deoxy-D-xylulose-5-phosphate (DXP) to 2-C-methyl-D-erythritol 4-phosphate (MEP). In Burkholderia lata (strain ATCC 17760 / DSM 23089 / LMG 22485 / NCIMB 9086 / R18194 / 383), this protein is 1-deoxy-D-xylulose 5-phosphate reductoisomerase.